Here is an 87-residue protein sequence, read N- to C-terminus: Putative defensin-like protein 317 (87 aa).

The N-terminal stretch at 1–24 (MKSFLVAFLIVLVFFCVEMKIGNG) is a signal peptide. 3 disulfide bridges follow: C38-C71, C47-C80, and C56-C82.

Belongs to the DEFL family.

The protein localises to the secreted. The sequence is that of Putative defensin-like protein 317 from Arabidopsis thaliana (Mouse-ear cress).